Here is a 265-residue protein sequence, read N- to C-terminus: Type III pantothenate kinase (265 aa).

9–16 contacts ATP; the sequence is DAGNSRIK. Substrate contacts are provided by residues Y96 and 103–106; that span reads GSDR. The active-site Proton acceptor is the D105. Residue T129 coordinates ATP. T189 contacts substrate.

Belongs to the type III pantothenate kinase family. As to quaternary structure, homodimer. The cofactor is NH4(+). It depends on K(+) as a cofactor.

Its subcellular location is the cytoplasm. It catalyses the reaction (R)-pantothenate + ATP = (R)-4'-phosphopantothenate + ADP + H(+). The protein operates within cofactor biosynthesis; coenzyme A biosynthesis; CoA from (R)-pantothenate: step 1/5. Catalyzes the phosphorylation of pantothenate (Pan), the first step in CoA biosynthesis. The polypeptide is Type III pantothenate kinase (Burkholderia orbicola (strain AU 1054)).